The primary structure comprises 391 residues: NAD(P)H-quinone oxidoreductase subunit H, chloroplastic (391 aa).

The protein belongs to the complex I 49 kDa subunit family. In terms of assembly, NDH is composed of at least 16 different subunits, 5 of which are encoded in the nucleus.

The protein resides in the plastid. It localises to the chloroplast thylakoid membrane. It carries out the reaction a plastoquinone + NADH + (n+1) H(+)(in) = a plastoquinol + NAD(+) + n H(+)(out). The catalysed reaction is a plastoquinone + NADPH + (n+1) H(+)(in) = a plastoquinol + NADP(+) + n H(+)(out). In terms of biological role, NDH shuttles electrons from NAD(P)H:plastoquinone, via FMN and iron-sulfur (Fe-S) centers, to quinones in the photosynthetic chain and possibly in a chloroplast respiratory chain. The immediate electron acceptor for the enzyme in this species is believed to be plastoquinone. Couples the redox reaction to proton translocation, and thus conserves the redox energy in a proton gradient. The protein is NAD(P)H-quinone oxidoreductase subunit H, chloroplastic of Physcomitrium patens (Spreading-leaved earth moss).